A 444-amino-acid chain; its full sequence is Phosphoglucosamine mutase (444 aa).

Ser102 serves as the catalytic Phosphoserine intermediate. Mg(2+) is bound by residues Ser102, Asp241, Asp243, and Asp245. A Phosphoserine modification is found at Ser102.

The protein belongs to the phosphohexose mutase family. It depends on Mg(2+) as a cofactor. Post-translationally, activated by phosphorylation.

It carries out the reaction alpha-D-glucosamine 1-phosphate = D-glucosamine 6-phosphate. In terms of biological role, catalyzes the conversion of glucosamine-6-phosphate to glucosamine-1-phosphate. The protein is Phosphoglucosamine mutase of Erwinia tasmaniensis (strain DSM 17950 / CFBP 7177 / CIP 109463 / NCPPB 4357 / Et1/99).